Consider the following 838-residue polypeptide: MPAERPAGSGGSEAPAMVEQLDTAVITPAMLEEEEQLEAAGLERERKMLEKARMSWDRESTEIRYRRLQHLLEKSNIYSKFLLTKMEQQQLEEQKKKEKLERKKESLKVKKGKNSIDASEEKPVMRKKRGREDESYNISEVMSKEEILSVAKKNKKENEDENSSSTNLCVEDLQKNKDSNSIIKDRLSETVRQNTKFFFDPVRKCNGQPVPFQQPKHFTGGVMRWYQVEGMEWLRMLWENGINGILADEMGLGKTVQCIATIALMIQRGVPGPFLVCGPLSTLPNWMAEFKRFTPDIPTMLYHGTQEERQKLVRNIYKRKGTLQIHPVVITSFEIAMRDRNALQHCYWKYLIVDEGHRIKNMKCRLIRELKRFNADNKLLLTGTPLQNNLSELWSLLNFLLPDVFDDLKSFESWFDITSLSETAEDIIAKEREQNVLHMLHQILTPFLLRRLKSDVALEVPPKREVVVYAPLSKKQEIFYTAIVNRTIANMFGSSEKETIELSPTGRPKRRTRKSINYSKIDDFPNELEKLISQIQPEVDRERAVVEVNIPVESEVNLKLQNIMMLLRKCCNHPYLIEYPIDPVTQEFKIDEELVTNSGKFLILDRMLPELKKRGHKVLLFSQMTSMLDILMDYCHLRDFNFSRLDGSMSYSEREKNMHSFNTDPEVFIFLVSTRAGGLGINLTAADTVIIYDSDWNPQSDLQAQDRCHRIGQTKPVVVYRLVTANTIDQKIVERAAAKRKLEKLIIHKNHFKGGQSGLNLSKNFLDPKELMELLKSRDYEREIKGSREKVISDKDLELLLDRSDLIDQMNASGPIKEKMGIFKILENSEDSSPECLF.

A coiled-coil region spans residues 30–115; that stretch reads MLEEEEQLEA…SLKVKKGKNS (86 aa). Basic and acidic residues predominate over residues 94 to 108; it reads QKKKEKLERKKESLK. Positions 94–135 are disordered; the sequence is QKKKEKLERKKESLKVKKGKNSIDASEEKPVMRKKRGREDES. Ser-115 carries the phosphoserine modification. The span at 119 to 134 shows a compositional bias: basic and acidic residues; that stretch reads SEEKPVMRKKRGREDE. The Helicase ATP-binding domain occupies 235 to 403; the sequence is RMLWENGING…WSLLNFLLPD (169 aa). 248–255 lines the ATP pocket; that stretch reads DEMGLGKT. Positions 354 to 357 match the DEAH box motif; it reads DEGH. Phosphoserine occurs at positions 503 and 515. The 165-residue stretch at 603–767 folds into the Helicase C-terminal domain; it reads ILDRMLPELK…GLNLSKNFLD (165 aa).

This sequence belongs to the SNF2/RAD54 helicase family. Highly expressed in proliferative tissues such as adult thymus and testis, and expressed at lower levels in uterus, small intestine, colon, and peripheral blood mononuclear cells. Also expressed in neoplastic cell lines including those derived from myeloid and lymphoid leukemias.

The protein localises to the nucleus. Functionally, plays an essential role in normal development and survival. Involved in regulation of the expansion or survival of lymphoid cells. Required for de novo or maintenance DNA methylation. May control silencing of the imprinted CDKN1C gene through DNA methylation. May play a role in formation and organization of heterochromatin, implying a functional role in the regulation of transcription and mitosis. The polypeptide is Lymphoid-specific helicase (Homo sapiens (Human)).